The following is a 344-amino-acid chain: Dihydroorotase (344 aa).

Positions 13 and 15 each coordinate Zn(2+). Residues 15–17 and Asn-41 each bind substrate; that span reads HFR. Zn(2+)-binding residues include Lys-98, His-135, and His-173. N6-carboxylysine is present on Lys-98. His-135 serves as a coordination point for substrate. Residue Leu-218 participates in substrate binding. Residue Asp-246 participates in Zn(2+) binding. Asp-246 is a catalytic residue. Substrate-binding residues include His-250 and Ala-262.

It belongs to the metallo-dependent hydrolases superfamily. DHOase family. Class II DHOase subfamily. Homodimer. Zn(2+) is required as a cofactor.

It carries out the reaction (S)-dihydroorotate + H2O = N-carbamoyl-L-aspartate + H(+). It participates in pyrimidine metabolism; UMP biosynthesis via de novo pathway; (S)-dihydroorotate from bicarbonate: step 3/3. In terms of biological role, catalyzes the reversible cyclization of carbamoyl aspartate to dihydroorotate. This Shewanella woodyi (strain ATCC 51908 / MS32) protein is Dihydroorotase.